The following is a 500-amino-acid chain: Cytochrome P450 CYP736A12 (500 aa).

The chain crosses the membrane as a helical span at residues 4–24 (LAYPLLFVLLGALSWWILPII). A heme-binding site is contributed by C442.

The protein belongs to the cytochrome P450 family. It depends on heme as a cofactor.

The protein localises to the membrane. Functionally, probable heme-thiolate monooxygenase. In Panax ginseng (Korean ginseng), this protein is Cytochrome P450 CYP736A12.